We begin with the raw amino-acid sequence, 145 residues long: uncharacterized protein (145 aa).

This is an uncharacterized protein from Homo sapiens (Human).